Reading from the N-terminus, the 650-residue chain is SPARC-like protein 1 (650 aa).

The N-terminal stretch at 1-16 (MKAVLLLLCALGTAVA) is a signal peptide. Positions 51–352 (TADIENHPSD…HGAGDDYFIP (302 aa)) are disordered. Positions 54–64 (IENHPSDKAEK) are enriched in basic and acidic residues. Ser-70, Ser-78, and Ser-86 each carry phosphoserine. Residues 75-85 (HEQSTEQDKTY) are compositionally biased toward basic and acidic residues. Positions 91-101 (LKDEEDGDGDL) are enriched in acidic residues. 2 stretches are compositionally biased toward polar residues: residues 116–126 (EGTSEPQQKSL) and 135–148 (TVST…QRAN). Asn-148 carries N-linked (GlcNAc...) asparagine glycosylation. Residues Ser-155 and Ser-163 each carry the phosphoserine modification. Polar residues predominate over residues 157-174 (EQPVSDSHQQPNESSKQT). Asn-168 carries an N-linked (GlcNAc...) asparagine glycan. Residues 189–210 (IPNEEEEEEEDEEEEEEEEPED) show a composition bias toward acidic residues. Ser-272 is modified (phosphoserine). The span at 277 to 299 (EDKAAGSKEHIPHTEQQDQEGKA) shows a compositional bias: basic and acidic residues. Ser-353 bears the Phosphoserine mark. A disordered region spans residues 375–415 (EETTTGESENRREAADNQEAKKAESSPNAEPSDEGNSREHS). The segment covering 382–398 (SENRREAADNQEAKKAE) has biased composition (basic and acidic residues). Position 406 is a phosphoserine (Ser-406). The Follistatin-like domain occupies 418 to 440 (SCTNFQCKRGHICKTDPQGKPHC). 7 disulfides stabilise this stretch: Cys-419/Cys-430, Cys-424/Cys-440, Cys-442/Cys-476, Cys-448/Cys-469, Cys-458/Cys-495, Cys-501/Cys-612, and Cys-620/Cys-636. Residues 436 to 497 (GKPHCVCQDP…QLDYFGACKS (62 aa)) enclose the Kazal-like domain. Asn-462 carries N-linked (GlcNAc...) asparagine glycosylation. Positions 608 to 643 (PMEHCITRFFEECDPNKDKHITLKEWGHCFGIKEED) constitute an EF-hand domain. Ca(2+) contacts are provided by Asp-621, Asn-623, Asp-625, His-627, and Glu-632.

It belongs to the SPARC family. Highest expression in brain. Moderate levels in heart, adrenal gland, epididymis and lung. Low levels in kidney, eye, liver, spleen, submandibular gland and testis.

The protein resides in the secreted. It is found in the extracellular space. Its subcellular location is the extracellular matrix. This Mus musculus (Mouse) protein is SPARC-like protein 1 (Sparcl1).